A 353-amino-acid chain; its full sequence is Fasciculation and elongation protein zeta-2 (353 aa).

Positions 19 to 49 are disordered; sequence SLLDQENCNASPEPGAEAGAEAGGGADGFPA. Residues 28–38 show a composition bias toward low complexity; sequence ASPEPGAEAGA. 3 positions are modified to phosphoserine: S135, S176, and S195. Positions 214 to 286 form a coiled coil; that stretch reads KRLSVSELNE…AKKKKKLKNG (73 aa). Positions 271–300 are disordered; it reads KEHKETAKKKKKLKNGSSQNGKNERSHMPG.

The protein belongs to the zygin family. In terms of assembly, homodimer; disulfide-linked. May form heterodimers with FEZ1. Interacts with synaptotagmin. As to expression, expressed in nonneural tissues, such as heart, lung, spleen, muscle, testis, placenta and melanocytes.

Involved in axonal outgrowth and fasciculation. In Homo sapiens (Human), this protein is Fasciculation and elongation protein zeta-2 (FEZ2).